The primary structure comprises 430 residues: Enolase (430 aa).

Q163 lines the (2R)-2-phosphoglycerate pocket. The active-site Proton donor is the E205. The Mg(2+) site is built by D242, E285, and D312. (2R)-2-phosphoglycerate is bound by residues K337, R366, S367, and K388. K337 (proton acceptor) is an active-site residue.

It belongs to the enolase family. Mg(2+) serves as cofactor.

It is found in the cytoplasm. Its subcellular location is the secreted. The protein localises to the cell surface. It catalyses the reaction (2R)-2-phosphoglycerate = phosphoenolpyruvate + H2O. The protein operates within carbohydrate degradation; glycolysis; pyruvate from D-glyceraldehyde 3-phosphate: step 4/5. In terms of biological role, catalyzes the reversible conversion of 2-phosphoglycerate (2-PG) into phosphoenolpyruvate (PEP). It is essential for the degradation of carbohydrates via glycolysis. This is Enolase from Bifidobacterium animalis subsp. lactis (strain AD011).